A 346-amino-acid polypeptide reads, in one-letter code: Enoyl-[acyl-carrier-protein] reductase, mitochondrial (346 aa).

Residues 1 to 22 (MQKTIRSQALIYRKFGDPLKVL) constitute a mitochondrion transit peptide. Tyrosine 59 functions as the Proton donor in the catalytic mechanism. Residues asparagine 131, 157 to 160 (NSGV), 180 to 182 (RNR), 249 to 252 (YGGM), 274 to 276 (VAV), and lysine 332 contribute to the NADP(+) site.

This sequence belongs to the zinc-containing alcohol dehydrogenase family. Quinone oxidoreductase subfamily. In terms of assembly, homodimer.

The protein localises to the mitochondrion. The enzyme catalyses a 2,3-saturated acyl-[ACP] + NADP(+) = a (2E)-enoyl-[ACP] + NADPH + H(+). Its function is as follows. Catalyzes the NADPH-dependent reduction of trans-2-enoyl thioesters in mitochondrial fatty acid synthesis (fatty acid synthesis type II). Fatty acid chain elongation in mitochondria uses acyl carrier protein (ACP) as an acyl group carrier, but the enzyme accepts both ACP and CoA thioesters as substrates in vitro. May provide the octanoyl chain used for lipoic acid biosynthesis, regulating protein lipoylation and mitochondrial respiratory activity. Involved in iron homeostasis; affecting Fe-S cluster assembly and ceramide metabolism. Required for proper morphology and bioenergetic functions of mitochondria. Required for maintenance of neurons. The protein is Enoyl-[acyl-carrier-protein] reductase, mitochondrial of Caenorhabditis elegans.